We begin with the raw amino-acid sequence, 268 residues long: Syntaxin-22 (268 aa).

The tract at residues 1-23 is disordered; that stretch reads MSFQDLESGRGRSTRKFNGGRQD. Position 2 is an N-acetylserine (Ser2). Topologically, residues 2–246 are cytoplasmic; sequence SFQDLESGRG…AAKTQKSNSS (245 aa). The t-SNARE coiled-coil homology domain maps to 175–237; the sequence is EAVIEEREQG…SQGKSQLVQA (63 aa). The chain crosses the membrane as a helical; Anchor for type IV membrane protein span at residues 247-267; sequence LTCLLLVIFGIVLLIVIIVLA. Ala268 is a topological domain (vesicular).

It belongs to the syntaxin family. As to quaternary structure, interacts with VTI11 and SYP51 to form a t-SNARE complex, but not with VPS45. In terms of tissue distribution, expressed in roots, leaves, stems, flower and green siliques.

The protein localises to the prevacuolar compartment membrane. Its subcellular location is the vacuole membrane. May provide the t-SNARE function in the vacuolar assembly. Promotes the formation of vacuolar membrane 'bulbs'. Required for inflorescence stem gravitropism. In Arabidopsis thaliana (Mouse-ear cress), this protein is Syntaxin-22 (SYP22).